A 287-amino-acid polypeptide reads, in one-letter code: Deoxyuridine 5'-triphosphate nucleotidohydrolase (287 aa).

173–175 contacts substrate; that stretch reads RSG. Over residues 264 to 275 the composition is skewed to low complexity; sequence SSSKDTSDSQMS. Residues 264 to 287 form a disordered region; sequence SSSKDTSDSQMSRGDAGLGSSGLM.

It belongs to the dUTPase family. It depends on Mg(2+) as a cofactor.

It catalyses the reaction dUTP + H2O = dUMP + diphosphate + H(+). Functionally, involved in nucleotide metabolism: produces dUMP, the immediate precursor of thymidine nucleotides and decreases the intracellular concentration of dUTP to avoid uracil incorporation into viral DNA. This Saimiriine herpesvirus 2 (strain 11) (SaHV-2) protein is Deoxyuridine 5'-triphosphate nucleotidohydrolase.